The chain runs to 55 residues: Large ribosomal subunit protein bL33 (55 aa).

The protein belongs to the bacterial ribosomal protein bL33 family.

The chain is Large ribosomal subunit protein bL33 from Klebsiella pneumoniae (strain 342).